A 379-amino-acid chain; its full sequence is MAKRDYYEVLGVGKNASDDEIKKAYRKLAMKHHPDRNPDNKEAEEKFKEVKEAYEMLSDPEKKAAYDQYGHAGVDPNMAGGFGGGGFGGGGFAEAFGDIFGDIFGQAAGGGRRGGGPQAYRGADLRYSMEISLEQAAHGHEAQIRVPHWDDCEHCHGNGAEPGSSVETCPTCNGVGQVRVSQGFFTMQQTCPKCHGSGKFIPKPCTKCHGQGKLKSQKTLEVKIPAGIDEGMRIRSSGNGEPGINGGPPGDLYVEVHIKQHPVFERDGDDLHCQMPISFATAALGGDIEVPTLGGRASFPVPEGTQAGKTFRLRGKGIKGVRSGYPGDLYVHVNVETPVKLTEAQKDILRQFDRSVHEGGSRHSPQEQSWLDKVKSFFS.

Residues 5–70 (DYYEVLGVGK…EKKAAYDQYG (66 aa)) enclose the J domain. A CR-type zinc finger spans residues 139–217 (GHEAQIRVPH…CHGQGKLKSQ (79 aa)). The Zn(2+) site is built by C152, C155, C169, C172, C191, C194, C205, and C208. CXXCXGXG motif repeat units follow at residues 152 to 159 (CEHCHGNG), 169 to 176 (CPTCNGVG), 191 to 198 (CPKCHGSG), and 205 to 212 (CTKCHGQG).

Belongs to the DnaJ family. Homodimer. The cofactor is Zn(2+).

Its subcellular location is the cytoplasm. Participates actively in the response to hyperosmotic and heat shock by preventing the aggregation of stress-denatured proteins and by disaggregating proteins, also in an autonomous, DnaK-independent fashion. Unfolded proteins bind initially to DnaJ; upon interaction with the DnaJ-bound protein, DnaK hydrolyzes its bound ATP, resulting in the formation of a stable complex. GrpE releases ADP from DnaK; ATP binding to DnaK triggers the release of the substrate protein, thus completing the reaction cycle. Several rounds of ATP-dependent interactions between DnaJ, DnaK and GrpE are required for fully efficient folding. Also involved, together with DnaK and GrpE, in the DNA replication of plasmids through activation of initiation proteins. This is Chaperone protein DnaJ from Cupriavidus metallidurans (strain ATCC 43123 / DSM 2839 / NBRC 102507 / CH34) (Ralstonia metallidurans).